Consider the following 390-residue polypeptide: MEETGAQCAPPPPAGSQTGVSQVNLSAAPSHNCSTEGYVYQDSVALPWKVLLVVLLALITLATTLSNAFVIATVYRTRKLHTPANYLIASLAVTDLLVSILVMPISTMYVVTGRWTLGQVVCDFWLSSDITCCTASILHLCVIALDRYWAITDAVEYSAKRTPKRAAVMIALVWVFSISISLPPFFWRQAKAEEEVLDCLVNTDHILYTVYSTVGAFYFPTLLLIALYSRIYVEARSRILKQTPNRTGKRLTRAQLMTDSPGSTSSVTSINSRAPDVPSESGSPVYVNQVKVRVSDALVEKKKLMAARERKATKTLGIILGAFIVCWLPFFIISLVMPICKDACWFHLAIFDFFTWLGYLNSLINPIIYTMSNEDFKQAFHKLIRFKCAS.

The disordered stretch occupies residues M1–S21. Over M1–L46 the chain is Extracellular. Residues N24 and N32 are each glycosylated (N-linked (GlcNAc...) asparagine). Residues P47 to A72 form a helical membrane-spanning segment. The Cytoplasmic portion of the chain corresponds to T73–Y86. A helical membrane pass occupies residues L87–V111. Residues T112–Q119 are Extracellular-facing. The helical transmembrane segment at V120 to L145 threads the bilayer. C122 and C199 are joined by a disulfide. 2 residues coordinate ergotamine: D129 and T134. The DRY motif; important for ligand-induced conformation changes and signaling signature appears at D146–Y148. The Cytoplasmic portion of the chain corresponds to D146–R165. A helical transmembrane segment spans residues A166–P184. Residues F185–H205 are Extracellular-facing. V201 serves as a coordination point for ergotamine. The helical transmembrane segment at I206 to S229 threads the bilayer. Residues R230–T315 lie on the Cytoplasmic side of the membrane. Positions L251 to G282 are disordered. The span at Q255–S272 shows a compositional bias: polar residues. Residues L316–M337 form a helical membrane-spanning segment. At P338–H347 the chain is on the extracellular side. A helical membrane pass occupies residues L348–T370. Residues N365 to Y369 carry the NPxxY motif; important for ligand-induced conformation changes and signaling motif. Residues M371–S390 are Cytoplasmic-facing. Residue C388 is the site of S-palmitoyl cysteine attachment.

Belongs to the G-protein coupled receptor 1 family. As to quaternary structure, homodimer. Heterodimer with HTR1D. In terms of processing, phosphorylated. Desensitization of the receptor may be mediated by its phosphorylation. Palmitoylated.

It localises to the cell membrane. Its function is as follows. G-protein coupled receptor for 5-hydroxytryptamine (serotonin). Also functions as a receptor for ergot alkaloid derivatives, various anxiolytic and antidepressant drugs and other psychoactive substances, such as lysergic acid diethylamide (LSD). Ligand binding causes a conformation change that triggers signaling via guanine nucleotide-binding proteins (G proteins) and modulates the activity of downstream effectors, such as adenylate cyclase. HTR1B is coupled to G(i)/G(o) G alpha proteins and mediates inhibitory neurotransmission by inhibiting adenylate cyclase activity. Arrestin family members inhibit signaling via G proteins and mediate activation of alternative signaling pathways. Regulates the release of 5-hydroxytryptamine, dopamine and acetylcholine in the brain, and thereby affects neural activity, nociceptive processing, pain perception, mood and behavior. Besides, plays a role in vasoconstriction of cerebral arteries. This Equus caballus (Horse) protein is 5-hydroxytryptamine receptor 1B (HTR1B).